A 539-amino-acid polypeptide reads, in one-letter code: Chaperonin GroEL (539 aa).

Residues 29-32, 86-90, Gly413, 479-481, and Asp495 each bind ATP; these read TLGP, DGTTT, and DAL.

The protein belongs to the chaperonin (HSP60) family. In terms of assembly, forms a cylinder of 14 subunits composed of two heptameric rings stacked back-to-back. Interacts with the co-chaperonin GroES.

It is found in the cytoplasm. The enzyme catalyses ATP + H2O + a folded polypeptide = ADP + phosphate + an unfolded polypeptide.. Functionally, together with its co-chaperonin GroES, plays an essential role in assisting protein folding. The GroEL-GroES system forms a nano-cage that allows encapsulation of the non-native substrate proteins and provides a physical environment optimized to promote and accelerate protein folding. This is Chaperonin GroEL from Thermosipho africanus (strain TCF52B).